A 248-amino-acid chain; its full sequence is Carbohydrate deacetylase (248 aa).

Mg(2+) contacts are provided by histidine 59 and histidine 121.

The protein belongs to the YdjC deacetylase family. Requires Mg(2+) as cofactor.

Functionally, probably catalyzes the deacetylation of acetylated carbohydrates an important step in the degradation of oligosaccharides. In Brevibacillus brevis (strain 47 / JCM 6285 / NBRC 100599), this protein is Carbohydrate deacetylase.